Reading from the N-terminus, the 84-residue chain is MAHKKAGGSTRNGRDSNAQRLGVKCFGGQLISAGSIIVKQRGTKFHPGKNVGCGKDHTIFAIVKGKVEFKKKGLKKRTYINIIN.

It belongs to the bacterial ribosomal protein bL27 family.

The protein is Large ribosomal subunit protein bL27 of Buchnera aphidicola subsp. Acyrthosiphon pisum (strain Tuc7).